The following is a 634-amino-acid chain: Chaperone protein HtpG (634 aa).

The a; substrate-binding stretch occupies residues 1-344 (MNETVANNKE…SNDLPLNVSR (344 aa)). The tract at residues 345-561 (EILQDNKVTQ…DFEMGTQMAK (217 aa)) is b. The segment at 562–634 (LLAAAGQAVP…TAINSLLTKG (73 aa)) is c.

It belongs to the heat shock protein 90 family. Homodimer.

The protein resides in the cytoplasm. Functionally, molecular chaperone. Has ATPase activity. The protein is Chaperone protein HtpG of Vibrio vulnificus (strain YJ016).